The chain runs to 124 residues: Large ribosomal subunit protein bL20 (124 aa).

Belongs to the bacterial ribosomal protein bL20 family.

In terms of biological role, binds directly to 23S ribosomal RNA and is necessary for the in vitro assembly process of the 50S ribosomal subunit. It is not involved in the protein synthesizing functions of that subunit. The chain is Large ribosomal subunit protein bL20 from Ehrlichia canis (strain Jake).